Here is a 695-residue protein sequence, read N- to C-terminus: Probable serine/threonine-protein kinase DDB_G0279405 (695 aa).

2 disordered regions span residues 119–138 and 149–192; these read IVAQ…PQPQ and QIPT…KRHK. The segment covering 124–138 has biased composition (pro residues); the sequence is QPQPQPQPQPQPQPQ. Positions 149 to 160 are enriched in low complexity; that stretch reads QIPTTPPQQISQ. Residues 161–173 are compositionally biased toward polar residues; the sequence is FNITGNKSPSSIG. The Protein kinase domain maps to 201–462; it reads YVFVRKLGKG…IAEIKSHKWT (262 aa). ATP-binding positions include 207–215 and Lys230; that span reads LGKGTFGKV. The active-site Proton acceptor is Asp329. The interval 491–580 is disordered; sequence TDHTIKPSDN…NQNQNNNNNS (90 aa). Residues 510-528 are compositionally biased toward low complexity; sequence LSSSSGGESSGIIGSSNES. The segment covering 529–541 has biased composition (polar residues); that stretch reads KSMYNNVNSKQKI. A compositionally biased stretch (low complexity) spans 542 to 580; it reads QNQNQNQNQNQNQNQNQNQNQNHNQNQNQNQNQNNNNNS.

This sequence belongs to the protein kinase superfamily. Ser/Thr protein kinase family.

The catalysed reaction is L-seryl-[protein] + ATP = O-phospho-L-seryl-[protein] + ADP + H(+). It catalyses the reaction L-threonyl-[protein] + ATP = O-phospho-L-threonyl-[protein] + ADP + H(+). This chain is Probable serine/threonine-protein kinase DDB_G0279405, found in Dictyostelium discoideum (Social amoeba).